Here is a 593-residue protein sequence, read N- to C-terminus: MHLYRSHTCGALSRGDVGQTVRLSGWVHRKRDHGGVLFVDLRDHYGMTQIVADADSPALPILEALRVESVVTIDGEVKARSEGTVNANLSTGEIEVFARVATVLSAAEELPMPVAGEQEYPEDIRLRYRFLDLRRETLHANIVKRTKVISDMRRRMEGAGFTEYSTPILTASSPEGARDFLVPSRIHPGKFYALPQAPQQYKQLLMVAGFDRYFQIAPCFRDEDPRADRLPGEFYQLDLEMSFVTQEEVWETMEPVIGGVFEAFADGRKVTPIGSFPRIPYAEAMLKYGSDKPDLRNPIIISDVSEEFAQSGFGLFEKIVGTGGVVRLIPAPNTADKSRKFFDEMNDWARAEGHAGLGYVTRKQGEFGGPIAKNHGADKMAALFDRLGLGPDDGCFFAAGKAEQAAKLAGAARTRVADQLGLIDKDRFELCWIVDFPFYEWDEENKKVEFSHNPFSMPQGGLDALNTQDPLTINAFQYDLVCNGFEIASGSIRNQSPETMVKAFEIVGLSKADVEERFGGLYRAFQYGAPPHGGMAAGVDRIVMLICGAQNLREITLFPMNQRAEDLLMGAPSPAALKQLRELNIRVVEQTKG.

Glu-175 lines the L-aspartate pocket. An aspartate region spans residues 199-202; sequence QQYK. Positions 221 and 452 each coordinate L-aspartate. 221–223 provides a ligand contact to ATP; it reads RDE. Residue Glu-486 coordinates ATP. Arg-493 contributes to the L-aspartate binding site. Residue 538–541 coordinates ATP; the sequence is GVDR.

This sequence belongs to the class-II aminoacyl-tRNA synthetase family. Type 1 subfamily. In terms of assembly, homodimer.

Its subcellular location is the cytoplasm. The enzyme catalyses tRNA(Asx) + L-aspartate + ATP = L-aspartyl-tRNA(Asx) + AMP + diphosphate. Functionally, aspartyl-tRNA synthetase with relaxed tRNA specificity since it is able to aspartylate not only its cognate tRNA(Asp) but also tRNA(Asn). Reaction proceeds in two steps: L-aspartate is first activated by ATP to form Asp-AMP and then transferred to the acceptor end of tRNA(Asp/Asn). The protein is Aspartate--tRNA(Asp/Asn) ligase of Novosphingobium aromaticivorans (strain ATCC 700278 / DSM 12444 / CCUG 56034 / CIP 105152 / NBRC 16084 / F199).